A 129-amino-acid chain; its full sequence is Ribulose bisphosphate carboxylase small subunit (129 aa).

Residues 104–120 (ENEPSLRMTRTESDGRS) are compositionally biased toward basic and acidic residues. The segment at 104–129 (ENEPSLRMTRTESDGRSQHYTWETQR) is disordered.

It belongs to the RuBisCO small chain family. In terms of assembly, heterohexadecamer of 8 large and 8 small subunits.

Its function is as follows. RuBisCO catalyzes two reactions: the carboxylation of D-ribulose 1,5-bisphosphate, the primary event in carbon dioxide fixation, as well as the oxidative fragmentation of the pentose substrate. Both reactions occur simultaneously and in competition at the same active site. Although the small subunit is not catalytic it is essential for maximal activity. This is Ribulose bisphosphate carboxylase small subunit from Sinorhizobium medicae (strain WSM419) (Ensifer medicae).